A 425-amino-acid polypeptide reads, in one-letter code: Glutamate-1-semialdehyde 2,1-aminomutase (425 aa).

Lys-264 is subject to N6-(pyridoxal phosphate)lysine.

This sequence belongs to the class-III pyridoxal-phosphate-dependent aminotransferase family. HemL subfamily. As to quaternary structure, homodimer. Pyridoxal 5'-phosphate is required as a cofactor.

The protein resides in the cytoplasm. The enzyme catalyses (S)-4-amino-5-oxopentanoate = 5-aminolevulinate. Its pathway is porphyrin-containing compound metabolism; protoporphyrin-IX biosynthesis; 5-aminolevulinate from L-glutamyl-tRNA(Glu): step 2/2. The chain is Glutamate-1-semialdehyde 2,1-aminomutase from Leptospira biflexa serovar Patoc (strain Patoc 1 / Ames).